A 59-amino-acid polypeptide reads, in one-letter code: Large ribosomal subunit protein uL30 (59 aa).

Belongs to the universal ribosomal protein uL30 family. In terms of assembly, part of the 50S ribosomal subunit.

The chain is Large ribosomal subunit protein uL30 from Streptococcus agalactiae serotype Ia (strain ATCC 27591 / A909 / CDC SS700).